Here is an 886-residue protein sequence, read N- to C-terminus: Alanine--tRNA ligase (886 aa).

Positions 568, 572, 670, and 674 each coordinate Zn(2+).

This sequence belongs to the class-II aminoacyl-tRNA synthetase family. The cofactor is Zn(2+).

The protein localises to the cytoplasm. It catalyses the reaction tRNA(Ala) + L-alanine + ATP = L-alanyl-tRNA(Ala) + AMP + diphosphate. Functionally, catalyzes the attachment of alanine to tRNA(Ala) in a two-step reaction: alanine is first activated by ATP to form Ala-AMP and then transferred to the acceptor end of tRNA(Ala). Also edits incorrectly charged Ser-tRNA(Ala) and Gly-tRNA(Ala) via its editing domain. The sequence is that of Alanine--tRNA ligase from Prochlorococcus marinus (strain NATL2A).